Here is a 1093-residue protein sequence, read N- to C-terminus: uncharacterized protein (1093 aa).

This is an uncharacterized protein from Escherichia coli (strain K12).